The following is a 344-amino-acid chain: Laforin, isoform 9 (344 aa).

Disordered stretches follow at residues 1–44 (MHPK…PGPG), 58–134 (GGGA…PRGH), 158–188 (PAPGAERELRPAPPTGASASGRPRRPRRRAS), and 320–344 (SLKKTQNDPTNETSVFANPRQQCAT). The span at 77–88 (AARAGALGAARC) shows a compositional bias: low complexity. Residues 101–131 (RGPGPAGAGPVARGGGAGGRGGGAGRGGAGP) are compositionally biased toward gly residues. Residues 179-188 (RPRRPRRRAS) are compositionally biased toward basic residues.

As to quaternary structure, interacts with isoform 1 and isoform 2.

It is found in the nucleus. The chain is Laforin, isoform 9 from Homo sapiens (Human).